We begin with the raw amino-acid sequence, 57 residues long: Temporin-ALk (57 aa).

Residues 1–22 (MFTLKKSLLLLFFLGTINLSLC) form the signal peptide. The propeptide occupies 23–46 (EQERNAEEERRDDLGERQAEVEKR). A Serine amide modification is found at serine 56.

The protein belongs to the frog skin active peptide (FSAP) family. Temporin subfamily. As to expression, expressed by the skin glands.

It is found in the secreted. Functionally, antimicrobial peptide with weak activity against Gram-positive and Gram-negative bacteria and against fungi. Has been tested against S.aureus (MIC=15.0 ug/mL), B.pumilus (no activity detected), B.cereus (no activity detected), E.coli (MIC=30.0 ug/mL), B.dysenteriae (MIC=60.0 ug/mL), A.cacoaceticus (MIC=75.0 ug/mL), P.aeruginosa (MIC=25.0 ug/mL) and C.albicans (MIC=15.0 ug/mL). Also shows a weak hemolytic activity. In Amolops loloensis (Lolokou Sucker Frog), this protein is Temporin-ALk.